A 253-amino-acid chain; its full sequence is Snake venom serine proteinase 14 (253 aa).

A signal peptide spans 1-18; the sequence is MVLIRVLANLLILQLSYA. A propeptide spanning residues 19-24 is cleaved from the precursor; that stretch reads QKSSEL. A Peptidase S1 domain is found at 25–244; that stretch reads VIGGDECNIN…YTDWIQSIIA (220 aa). 6 cysteine pairs are disulfide-bonded: Cys31–Cys158, Cys49–Cys65, Cys93–Cys251, Cys137–Cys205, Cys169–Cys184, and Cys195–Cys220. Active-site charge relay system residues include His64 and Asp105. Asn116, Asn117, and Asn149 each carry an N-linked (GlcNAc...) asparagine glycan. The Charge relay system role is filled by Ser199.

It belongs to the peptidase S1 family. Snake venom subfamily. In terms of assembly, monomer. As to expression, expressed by the venom gland.

It is found in the secreted. Its function is as follows. Snake venom serine protease that may act in the hemostasis system of the prey. The protein is Snake venom serine proteinase 14 of Crotalus adamanteus (Eastern diamondback rattlesnake).